A 35-amino-acid chain; its full sequence is Photosystem II reaction center protein T (35 aa).

A helical membrane pass occupies residues 3–23; the sequence is ALVYTFLLVSTLGIIFFAIFF.

The protein belongs to the PsbT family. PSII is composed of 1 copy each of membrane proteins PsbA, PsbB, PsbC, PsbD, PsbE, PsbF, PsbH, PsbI, PsbJ, PsbK, PsbL, PsbM, PsbT, PsbY, PsbZ, Psb30/Ycf12, at least 3 peripheral proteins of the oxygen-evolving complex and a large number of cofactors. It forms dimeric complexes.

Its subcellular location is the plastid. The protein resides in the chloroplast thylakoid membrane. Its function is as follows. Found at the monomer-monomer interface of the photosystem II (PS II) dimer, plays a role in assembly and dimerization of PSII. PSII is a light-driven water plastoquinone oxidoreductase, using light energy to abstract electrons from H(2)O, generating a proton gradient subsequently used for ATP formation. This is Photosystem II reaction center protein T from Pinus thunbergii (Japanese black pine).